A 636-amino-acid chain; its full sequence is Protein BCAP (636 aa).

Coiled-coil stretches lie at residues 36 to 97 (LSCL…EQKE), 141 to 220 (ESEN…WNLQ), 249 to 325 (YKQR…HGKN), 377 to 484 (ISSE…ECQE), and 519 to 631 (LEEE…KMNS).

It belongs to the ODF2 family. In terms of tissue distribution, mainly expressed in trachea and testis. Not detected in bone marrow, bladder, leukocytes. Only weakly detected in tongue, stomach, brain and ovaries.

It localises to the cytoplasm. It is found in the cytoskeleton. The protein localises to the microtubule organizing center. The protein resides in the centrosome. Its subcellular location is the centriole. It localises to the centriolar satellite. It is found in the cilium basal body. Its function is as follows. Acts as a suppressor of ciliogenesis, specifically, the initiation of ciliogenesis. In Homo sapiens (Human), this protein is Protein BCAP.